The sequence spans 608 residues: 1-deoxy-D-xylulose-5-phosphate synthase (608 aa).

Thiamine diphosphate-binding positions include histidine 66 and 107–109; that span reads GHA. Aspartate 138 is a Mg(2+) binding site. Residues 139–140, asparagine 167, phenylalanine 277, and glutamate 350 contribute to the thiamine diphosphate site; that span reads GA. Asparagine 167 is a binding site for Mg(2+).

The protein belongs to the transketolase family. DXPS subfamily. Homodimer. Mg(2+) serves as cofactor. The cofactor is thiamine diphosphate.

It carries out the reaction D-glyceraldehyde 3-phosphate + pyruvate + H(+) = 1-deoxy-D-xylulose 5-phosphate + CO2. The protein operates within metabolic intermediate biosynthesis; 1-deoxy-D-xylulose 5-phosphate biosynthesis; 1-deoxy-D-xylulose 5-phosphate from D-glyceraldehyde 3-phosphate and pyruvate: step 1/1. Catalyzes the acyloin condensation reaction between C atoms 2 and 3 of pyruvate and glyceraldehyde 3-phosphate to yield 1-deoxy-D-xylulose-5-phosphate (DXP). This chain is 1-deoxy-D-xylulose-5-phosphate synthase, found in Thermotoga sp. (strain RQ2).